The chain runs to 118 residues: UPF0102 protein Lxx14785 (118 aa).

It belongs to the UPF0102 family.

This is UPF0102 protein Lxx14785 from Leifsonia xyli subsp. xyli (strain CTCB07).